We begin with the raw amino-acid sequence, 54 residues long: MQLSHLLLAFAMIFVMTIMYAPQVQADAWADANADADVNCEVTPYHPDCRGVMP.

Positions 1–26 (MQLSHLLLAFAMIFVMTIMYAPQVQA) are cleaved as a signal peptide. Positions 27-38 (DAWADANADADV) are excised as a propeptide.

It belongs to the formicidae venom precursor-01 superfamily. In terms of processing, contains 1 disulfide bond. As to expression, expressed by the venom gland.

Its subcellular location is the secreted. The chain is U-myrmicitoxin(01)-Tb5a from Tetramorium bicarinatum (Tramp ant).